Here is a 447-residue protein sequence, read N- to C-terminus: Diaminopimelate decarboxylase (447 aa).

Lys-72 is modified (N6-(pyridoxal phosphate)lysine). Residues Gly-258 and 300–303 (EPGR) contribute to the pyridoxal 5'-phosphate site. Substrate is bound by residues Arg-303, Arg-344, and Tyr-348. Residue Cys-375 is the Proton donor of the active site. Substrate-binding residues include Glu-376 and Tyr-405. Tyr-405 is a binding site for pyridoxal 5'-phosphate.

It belongs to the Orn/Lys/Arg decarboxylase class-II family. LysA subfamily. As to quaternary structure, homodimer. Pyridoxal 5'-phosphate serves as cofactor.

It carries out the reaction meso-2,6-diaminopimelate + H(+) = L-lysine + CO2. The protein operates within amino-acid biosynthesis; L-lysine biosynthesis via DAP pathway; L-lysine from DL-2,6-diaminopimelate: step 1/1. Its function is as follows. Specifically catalyzes the decarboxylation of meso-diaminopimelate (meso-DAP) to L-lysine. The protein is Diaminopimelate decarboxylase of Mycobacterium bovis (strain ATCC BAA-935 / AF2122/97).